Consider the following 250-residue polypeptide: MLMRQKGIIIKAVDYGESDKIITILNEHGAKVPLMARRAKKVKTGLQAQTQLFVYGLFIYNQWRGMGTLNSVDVISQHYKLQMDLYVSSYASLAAETIERSMDEGDIAPYNYQLLQFVLEKIESGTSAQLMSVVVMLKCMKRFGFTASFNRCAVSGNDTQADLIGYSFKFDGAISRQEASKDVHAVILSNKTLYLLDVLQKLPIDKMNSLNIHQEIIDEMSEIILMLYREYAGMFFKSQKLINQLKRLEQ.

The protein belongs to the RecO family.

Its function is as follows. Involved in DNA repair and RecF pathway recombination. In Staphylococcus aureus (strain bovine RF122 / ET3-1), this protein is DNA repair protein RecO.